Consider the following 553-residue polypeptide: MADPKTAAVGPLVGAVVQGTDSTRFLVFSSKTAELLSHHKVELTQEFPKEGWVEQDPKEILQSVYECIARTCEKLDEMNIDISNIKAVGISNQRETTVIWDKLTGEPLYNAVVWLDLRTQTTVEDLSKKIPGNSNFVKSKTGLPLSTYFSAVKLRWMLDNVRHVQKAVEEGRALFGTIDSWLIWSLTGGVNGGVHCTDVTNASRTMLFNIHSLEWDKELCDFFEIPMDLLPNVFSSSEIYGLIKTGALEGVPISGCLGDQCAALVGQMCFQEGQAKNTYGTGCFLLCNTGRKCVFSEHGLLTTIAYKLGKEKPAYYALEGSVAIAGAVIRWLRDNLGIIETSGDIEKLAKEVGTSYGCYFVPAFSGLYAPYWEPSARGILCGLTQFTNKCHIAFAALEAVCFQTREILEAMNRDCGIPLRHLQVDGGMTNNKVLMQLQADILHIPVIKPFMPETTALGAAMAAGAAEGVSVWSLEPQALSVLRMERFEPQIQATESEIRYATWKKAVMKSMGWVTSQSPESGDPSIFSSMPLGFFIVSSMVMLIGARYISGMP.

Thr20 is a substrate binding site. Arg24 lines the ATP pocket. Substrate is bound by residues Arg94, Tyr148, and Asp259. ATP-binding positions include Thr281, Gly326, and 427–431 (GMTNN). Residues 526–546 (IFSSMPLGFFIVSSMVMLIGA) traverse the membrane as a helical segment.

Belongs to the FGGY kinase family. Interacts with ARMC12 and PLD6.

The protein resides in the mitochondrion outer membrane. The protein localises to the cytoplasm. The catalysed reaction is glycerol + ATP = sn-glycerol 3-phosphate + ADP + H(+). Its pathway is polyol metabolism; glycerol degradation via glycerol kinase pathway; sn-glycerol 3-phosphate from glycerol: step 1/1. Functionally, key enzyme in the regulation of glycerol uptake and metabolism. Essential for male fertility and sperm mitochondrial sheath formation. Required for proper arrangement of crescent-like mitochondria to form the mitochondrial sheath during spermatogenesis. Can induce mitochondrial clustering through interactions with PLD6 and up-regulation of phosphatidic acid synthesis in the mitochondria. The polypeptide is Glycerol kinase 2 (GK2) (Macaca fascicularis (Crab-eating macaque)).